A 243-amino-acid chain; its full sequence is Adenosylcobinamide-GDP ribazoletransferase (243 aa).

5 helical membrane-spanning segments follow: residues 31–51 (LLFY…FNTL), 55–75 (APLM…SGGL), 109–129 (IAVV…LALI), 133–153 (ASVW…GLFL), and 188–208 (VLLA…CFFW).

The protein belongs to the CobS family. Mg(2+) is required as a cofactor.

It localises to the cell inner membrane. The enzyme catalyses alpha-ribazole + adenosylcob(III)inamide-GDP = adenosylcob(III)alamin + GMP + H(+). It catalyses the reaction alpha-ribazole 5'-phosphate + adenosylcob(III)inamide-GDP = adenosylcob(III)alamin 5'-phosphate + GMP + H(+). It functions in the pathway cofactor biosynthesis; adenosylcobalamin biosynthesis; adenosylcobalamin from cob(II)yrinate a,c-diamide: step 7/7. Joins adenosylcobinamide-GDP and alpha-ribazole to generate adenosylcobalamin (Ado-cobalamin). Also synthesizes adenosylcobalamin 5'-phosphate from adenosylcobinamide-GDP and alpha-ribazole 5'-phosphate. In Pseudomonas syringae pv. syringae (strain B728a), this protein is Adenosylcobinamide-GDP ribazoletransferase.